The following is a 233-amino-acid chain: Orotidine 5'-phosphate decarboxylase (233 aa).

Substrate is bound by residues aspartate 11, lysine 34, aspartate 61 to threonine 70, threonine 117, arginine 179, glutamine 189, glycine 209, and arginine 210. Lysine 63 serves as the catalytic Proton donor.

The protein belongs to the OMP decarboxylase family. Type 1 subfamily. As to quaternary structure, homodimer.

It carries out the reaction orotidine 5'-phosphate + H(+) = UMP + CO2. It functions in the pathway pyrimidine metabolism; UMP biosynthesis via de novo pathway; UMP from orotate: step 2/2. Catalyzes the decarboxylation of orotidine 5'-monophosphate (OMP) to uridine 5'-monophosphate (UMP). The polypeptide is Orotidine 5'-phosphate decarboxylase (Streptococcus agalactiae serotype III (strain NEM316)).